The following is a 188-amino-acid chain: dCTP deaminase (188 aa).

DCTP-binding positions include 111–116 (KSTYAR), 135–137 (TLE), Gln156, Tyr170, and Gln180. Glu137 acts as the Proton donor/acceptor in catalysis.

It belongs to the dCTP deaminase family. Homotrimer.

It catalyses the reaction dCTP + H2O + H(+) = dUTP + NH4(+). The protein operates within pyrimidine metabolism; dUMP biosynthesis; dUMP from dCTP (dUTP route): step 1/2. Catalyzes the deamination of dCTP to dUTP. This Ectopseudomonas mendocina (strain ymp) (Pseudomonas mendocina) protein is dCTP deaminase.